A 287-amino-acid polypeptide reads, in one-letter code: 4-hydroxybenzoate octaprenyltransferase (287 aa).

The next 9 membrane-spanning stretches (helical) occupy residues 21-41 (VGIFLLLWPTLWAVWIAAKGA), 44-64 (FKIAVIFIAGSVVMRAAGCIV), 91-111 (VTEAMLLFAVLSLIAFTLVLL), 112-132 (LNRLTVELAVIGILLALVYPF), 139-159 (LPQLWLGIAFSWSIPMAFAAT), 160-180 (VGHVPAVAWLLFFAAVLWPIV), 211-231 (LMIGLLQGSVLLTFGLLGWYL), 235-255 (YWFYLGLLVALGLMCYQQFLI), and 263-283 (CFAAFRNNNWVGFFIFLGILL).

Belongs to the UbiA prenyltransferase family. The cofactor is Mg(2+).

The protein localises to the cell inner membrane. It catalyses the reaction all-trans-octaprenyl diphosphate + 4-hydroxybenzoate = 4-hydroxy-3-(all-trans-octaprenyl)benzoate + diphosphate. It functions in the pathway cofactor biosynthesis; ubiquinone biosynthesis. In terms of biological role, catalyzes the prenylation of para-hydroxybenzoate (PHB) with an all-trans polyprenyl group. Mediates the second step in the final reaction sequence of ubiquinone-8 (UQ-8) biosynthesis, which is the condensation of the polyisoprenoid side chain with PHB, generating the first membrane-bound Q intermediate 3-octaprenyl-4-hydroxybenzoate. This is 4-hydroxybenzoate octaprenyltransferase from Coxiella burnetii (strain CbuK_Q154) (Coxiella burnetii (strain Q154)).